The primary structure comprises 828 residues: Periplasmic nitrate reductase (828 aa).

Residues 1–31 (MKLSRRSFMKANAVAAAAAAAGLSVPGVARA) constitute a signal peptide (tat-type signal). In terms of domain architecture, 4Fe-4S Mo/W bis-MGD-type spans 39-95 (IKWDKAPCRFCGTGCGVLVGTQQGRVVACQGDPDAPVNRGLNCIKGYFLPKIMYGKD). [4Fe-4S] cluster-binding residues include Cys46, Cys49, Cys53, and Cys81. Mo-bis(molybdopterin guanine dinucleotide) is bound by residues Lys83, Gln150, Asn175, Cys179, 212–219 (WGSNMAEM), 243–247 (STFQH), 262–264 (QSD), Met372, Gln376, Asn482, 508–509 (SD), Lys531, Asp558, and 718–727 (TGRVLEHWHT). A substrate-binding site is contributed by Phe794. Positions 802 and 819 each coordinate Mo-bis(molybdopterin guanine dinucleotide).

This sequence belongs to the prokaryotic molybdopterin-containing oxidoreductase family. NasA/NapA/NarB subfamily. In terms of assembly, component of the periplasmic nitrate reductase NapAB complex composed of NapA and NapB. [4Fe-4S] cluster is required as a cofactor. The cofactor is Mo-bis(molybdopterin guanine dinucleotide). Predicted to be exported by the Tat system. The position of the signal peptide cleavage has not been experimentally proven.

Its subcellular location is the periplasm. It catalyses the reaction 2 Fe(II)-[cytochrome] + nitrate + 2 H(+) = 2 Fe(III)-[cytochrome] + nitrite + H2O. Functionally, catalytic subunit of the periplasmic nitrate reductase complex NapAB. Receives electrons from NapB and catalyzes the reduction of nitrate to nitrite. This Salmonella agona (strain SL483) protein is Periplasmic nitrate reductase.